The following is a 125-amino-acid chain: Small ribosomal subunit protein uS13 (125 aa).

Residues 95–125 form a disordered region; that stretch reads GLPLRGQRTKTNARTRKGKRKTVANKKIASK.

It belongs to the universal ribosomal protein uS13 family. As to quaternary structure, part of the 30S ribosomal subunit. Forms a loose heterodimer with protein S19. Forms two bridges to the 50S subunit in the 70S ribosome.

Its function is as follows. Located at the top of the head of the 30S subunit, it contacts several helices of the 16S rRNA. In the 70S ribosome it contacts the 23S rRNA (bridge B1a) and protein L5 of the 50S subunit (bridge B1b), connecting the 2 subunits; these bridges are implicated in subunit movement. Contacts the tRNAs in the A and P-sites. The polypeptide is Small ribosomal subunit protein uS13 (Borrelia garinii subsp. bavariensis (strain ATCC BAA-2496 / DSM 23469 / PBi) (Borreliella bavariensis)).